Here is an 817-residue protein sequence, read N- to C-terminus: Leucine--tRNA ligase (817 aa).

Positions proline 42–histidine 52 match the 'HIGH' region motif. Positions lysine 576 to serine 580 match the 'KMSKS' region motif. Position 579 (lysine 579) interacts with ATP.

This sequence belongs to the class-I aminoacyl-tRNA synthetase family.

It localises to the cytoplasm. The enzyme catalyses tRNA(Leu) + L-leucine + ATP = L-leucyl-tRNA(Leu) + AMP + diphosphate. The polypeptide is Leucine--tRNA ligase (Thioalkalivibrio sulfidiphilus (strain HL-EbGR7)).